The sequence spans 2291 residues: Protein Ycf2 B (2291 aa).

1642 to 1649 (GSIGTGRS) contacts ATP.

Belongs to the Ycf2 family.

It is found in the plastid. The protein resides in the chloroplast stroma. Its function is as follows. Probable ATPase of unknown function. Its presence in a non-photosynthetic plant (Epifagus virginiana) and experiments in tobacco indicate that it has an essential function which is probably not related to photosynthesis. In Atropa belladonna (Belladonna), this protein is Protein Ycf2 B (ycf2-B).